Consider the following 112-residue polypeptide: Ribonuclease P protein component (112 aa).

The protein belongs to the RnpA family. As to quaternary structure, consists of a catalytic RNA component (M1 or rnpB) and a protein subunit.

The enzyme catalyses Endonucleolytic cleavage of RNA, removing 5'-extranucleotides from tRNA precursor.. In terms of biological role, RNaseP catalyzes the removal of the 5'-leader sequence from pre-tRNA to produce the mature 5'-terminus. It can also cleave other RNA substrates such as 4.5S RNA. The protein component plays an auxiliary but essential role in vivo by binding to the 5'-leader sequence and broadening the substrate specificity of the ribozyme. The sequence is that of Ribonuclease P protein component from Mesomycoplasma hyopneumoniae (strain 7448) (Mycoplasma hyopneumoniae).